Here is a 427-residue protein sequence, read N- to C-terminus: MSRNETLFERAQRTIPGGVNSPVRAFRSVGGTPRFIERAQGPYFWDADGQRYIDYIGSWGPMILGHVHPEVLEAVQRVLGNGFSFGAPTESEVEIAEEICKLVPSIEQVRMVSSGTEATMSALRLARGFTNRSRIVKFEGCYHGHADSLLVKAGSGLLTFGNPTSAGVPADIAKHTTVLEYNNVAELEEAFKAFGNEIASVIVEPVAGNMNLVRATPEFLQALRRLCTEHGSVLIFDEVMCGFRVALGGAQEVYGITPDLTCLGKVIGGGMPAAAFGGRRDIMAHLAPLGGVYQAGTLSGNPIAVAAGLKTLQLIQAPGFYDTLATRTARLVQGLANVAREAKVPFAADSLGGMFGLYFTDSIPTSFAEVTKSDVPRFNAFFHKMLDAGVYFAPSAYEAGFVSIVHDDAIVDATIDAARGAFASLAA.

K265 carries the post-translational modification N6-(pyridoxal phosphate)lysine.

The protein belongs to the class-III pyridoxal-phosphate-dependent aminotransferase family. HemL subfamily. In terms of assembly, homodimer. Pyridoxal 5'-phosphate is required as a cofactor.

The protein resides in the cytoplasm. It catalyses the reaction (S)-4-amino-5-oxopentanoate = 5-aminolevulinate. It functions in the pathway porphyrin-containing compound metabolism; protoporphyrin-IX biosynthesis; 5-aminolevulinate from L-glutamyl-tRNA(Glu): step 2/2. This is Glutamate-1-semialdehyde 2,1-aminomutase from Paraburkholderia phytofirmans (strain DSM 17436 / LMG 22146 / PsJN) (Burkholderia phytofirmans).